The primary structure comprises 362 residues: UDP-N-acetylglucosamine--N-acetylmuramyl-(pentapeptide) pyrophosphoryl-undecaprenol N-acetylglucosamine transferase (362 aa).

UDP-N-acetyl-alpha-D-glucosamine contacts are provided by residues 10 to 12 (TAG), asparagine 124, arginine 161, serine 195, and glutamine 291.

The protein belongs to the glycosyltransferase 28 family. MurG subfamily.

The protein resides in the cell membrane. It carries out the reaction di-trans,octa-cis-undecaprenyl diphospho-N-acetyl-alpha-D-muramoyl-L-alanyl-D-glutamyl-meso-2,6-diaminopimeloyl-D-alanyl-D-alanine + UDP-N-acetyl-alpha-D-glucosamine = di-trans,octa-cis-undecaprenyl diphospho-[N-acetyl-alpha-D-glucosaminyl-(1-&gt;4)]-N-acetyl-alpha-D-muramoyl-L-alanyl-D-glutamyl-meso-2,6-diaminopimeloyl-D-alanyl-D-alanine + UDP + H(+). It functions in the pathway cell wall biogenesis; peptidoglycan biosynthesis. Functionally, cell wall formation. Catalyzes the transfer of a GlcNAc subunit on undecaprenyl-pyrophosphoryl-MurNAc-pentapeptide (lipid intermediate I) to form undecaprenyl-pyrophosphoryl-MurNAc-(pentapeptide)GlcNAc (lipid intermediate II). In Streptomyces collinus, this protein is UDP-N-acetylglucosamine--N-acetylmuramyl-(pentapeptide) pyrophosphoryl-undecaprenol N-acetylglucosamine transferase.